The chain runs to 152 residues: Deoxyuridine 5'-triphosphate nucleotidohydrolase (152 aa).

Residues 71-73 (RSG), N84, 88-90 (LID), and M98 each bind substrate.

The protein belongs to the dUTPase family. Mg(2+) is required as a cofactor.

It carries out the reaction dUTP + H2O = dUMP + diphosphate + H(+). It functions in the pathway pyrimidine metabolism; dUMP biosynthesis; dUMP from dCTP (dUTP route): step 2/2. In terms of biological role, this enzyme is involved in nucleotide metabolism: it produces dUMP, the immediate precursor of thymidine nucleotides and it decreases the intracellular concentration of dUTP so that uracil cannot be incorporated into DNA. The sequence is that of Deoxyuridine 5'-triphosphate nucleotidohydrolase from Enterobacter sp. (strain 638).